The chain runs to 140 residues: Putative pre-16S rRNA nuclease (140 aa).

The protein belongs to the YqgF nuclease family.

The protein resides in the cytoplasm. Functionally, could be a nuclease involved in processing of the 5'-end of pre-16S rRNA. This is Putative pre-16S rRNA nuclease from Yersinia pseudotuberculosis serotype IB (strain PB1/+).